The chain runs to 399 residues: MRLETLPSEFQEALPVLEKIKAAGFEAYFVGGSVRDALLQRPIHDVDIASSSYPEETKRIFDRTVDVGIEHGTVLVLENNREYEVTTFRTEDVYVDYRRPSKVSFVRSLEEDLKRRDFTINALALDENGQLIDLFQGLDDLENRILRAVGTPAERFNEDALRIMRGFRFQATLNFDLEQDTLSAMTDCAPLLEKISVERIFIEFDKLLLAPFWRKGLEALLTSGAIEFLPDLKGSRAKLEQLFELDSDFCFSASEQAWAALLLALKTQEVQRFLRIWKTSREFAKRVADIVEIVTIRSERDLTKRDCYDYDIDLLLQAEELRQAQGLAVDFSAIHNLDASLTIHSKQEMVVNGGMLMRDFGFEPGPKLGQILKELEYAIVDGHLPNDLEAIYAYIKEKK.

ATP-binding residues include Gly32 and Arg35. Residues Gly32 and Arg35 each contribute to the CTP site. Mg(2+) is bound by residues Asp45 and Asp47. 5 residues coordinate ATP: Arg116, Asp159, Arg162, Arg165, and Arg168. CTP is bound by residues Arg116, Asp159, Arg162, Arg165, and Arg168.

Belongs to the tRNA nucleotidyltransferase/poly(A) polymerase family. Bacterial CCA-adding enzyme type 3 subfamily. In terms of assembly, homodimer. Requires Mg(2+) as cofactor.

It catalyses the reaction a tRNA precursor + 2 CTP + ATP = a tRNA with a 3' CCA end + 3 diphosphate. The catalysed reaction is a tRNA with a 3' CCA end + 2 CTP + ATP = a tRNA with a 3' CCACCA end + 3 diphosphate. In terms of biological role, catalyzes the addition and repair of the essential 3'-terminal CCA sequence in tRNAs without using a nucleic acid template. Adds these three nucleotides in the order of C, C, and A to the tRNA nucleotide-73, using CTP and ATP as substrates and producing inorganic pyrophosphate. tRNA 3'-terminal CCA addition is required both for tRNA processing and repair. Also involved in tRNA surveillance by mediating tandem CCA addition to generate a CCACCA at the 3' terminus of unstable tRNAs. While stable tRNAs receive only 3'-terminal CCA, unstable tRNAs are marked with CCACCA and rapidly degraded. This is CCA-adding enzyme from Streptococcus gordonii (strain Challis / ATCC 35105 / BCRC 15272 / CH1 / DL1 / V288).